Consider the following 74-residue polypeptide: Anionic peptide clone 9 (74 aa).

The first 24 residues, 1-24 (MVSKSLIVLLLVSVLVSTFFTTEA), serve as a signal peptide directing secretion.

Belongs to the non-disulfide-bridged peptide (NDBP) superfamily. Long chain multifunctional peptide (group 2) family. Expressed by the venom gland.

The protein resides in the secreted. May be an antimicrobial peptide. The chain is Anionic peptide clone 9 from Tityus costatus (Brazilian scorpion).